Consider the following 202-residue polypeptide: Small ribosomal subunit protein uS3 (202 aa).

The KH type-2 domain occupies 18–87; the sequence is LNEYLQRQLV…NPQIDVVEVP (70 aa).

This sequence belongs to the universal ribosomal protein uS3 family. Part of the 30S ribosomal subunit.

Binds the lower part of the 30S subunit head. The polypeptide is Small ribosomal subunit protein uS3 (Thermofilum pendens (strain DSM 2475 / Hrk 5)).